The sequence spans 267 residues: Actin maturation protease (267 aa).

The segment at 1–32 is disordered; it reads MSNISSVAPPPPPPPMIVTPSTPATTKERPVG. The segment covering 8–17 has biased composition (pro residues); it reads APPPPPPPMI. A peptidase C39-like region spans residues 74–188; it reads SIVQVGPTCG…WALIVGYLVD (115 aa). The active site involves Cys-82.

This sequence belongs to the ACTMAP family.

The catalysed reaction is N-terminal N(alpha)-acetyl-L-cysteinyl-L-aspartyl-[protein] + H2O = N-terminal L-aspartyl-[protein] + N-acetyl-L-cysteine. Functionally, actin maturation protease that specifically mediates the cleavage of immature acetylated N-terminal actin, thereby contributing to actin maturation. The polypeptide is Actin maturation protease (Drosophila melanogaster (Fruit fly)).